The chain runs to 375 residues: CCA-adding enzyme (375 aa).

Positions 8 and 11 each coordinate ATP. CTP contacts are provided by Gly-8 and Arg-11. Residues Asp-21 and Asp-23 each coordinate Mg(2+). ATP is bound by residues Arg-91, Arg-137, and Arg-140. 3 residues coordinate CTP: Arg-91, Arg-137, and Arg-140.

The protein belongs to the tRNA nucleotidyltransferase/poly(A) polymerase family. Bacterial CCA-adding enzyme type 2 subfamily. Mg(2+) serves as cofactor.

The enzyme catalyses a tRNA precursor + 2 CTP + ATP = a tRNA with a 3' CCA end + 3 diphosphate. The catalysed reaction is a tRNA with a 3' CCA end + 2 CTP + ATP = a tRNA with a 3' CCACCA end + 3 diphosphate. In terms of biological role, catalyzes the addition and repair of the essential 3'-terminal CCA sequence in tRNAs without using a nucleic acid template. Adds these three nucleotides in the order of C, C, and A to the tRNA nucleotide-73, using CTP and ATP as substrates and producing inorganic pyrophosphate. tRNA 3'-terminal CCA addition is required both for tRNA processing and repair. Also involved in tRNA surveillance by mediating tandem CCA addition to generate a CCACCA at the 3' terminus of unstable tRNAs. While stable tRNAs receive only 3'-terminal CCA, unstable tRNAs are marked with CCACCA and rapidly degraded. This Pseudomonas entomophila (strain L48) protein is CCA-adding enzyme.